The sequence spans 211 residues: ATP phosphoribosyltransferase (211 aa).

It belongs to the ATP phosphoribosyltransferase family. Short subfamily. Heteromultimer composed of HisG and HisZ subunits.

It is found in the cytoplasm. The catalysed reaction is 1-(5-phospho-beta-D-ribosyl)-ATP + diphosphate = 5-phospho-alpha-D-ribose 1-diphosphate + ATP. Its pathway is amino-acid biosynthesis; L-histidine biosynthesis; L-histidine from 5-phospho-alpha-D-ribose 1-diphosphate: step 1/9. Its function is as follows. Catalyzes the condensation of ATP and 5-phosphoribose 1-diphosphate to form N'-(5'-phosphoribosyl)-ATP (PR-ATP). Has a crucial role in the pathway because the rate of histidine biosynthesis seems to be controlled primarily by regulation of HisG enzymatic activity. The chain is ATP phosphoribosyltransferase from Bacillus cereus (strain ATCC 10987 / NRS 248).